The primary structure comprises 469 residues: GTPase Der (469 aa).

EngA-type G domains follow at residues 3-166 (PVIA…PEDE) and 177-350 (LRLA…ESAN). GTP contacts are provided by residues 9–16 (GRPNVGKS), 56–60 (DTGGI), 118–121 (NKVD), 183–190 (GRPNVGKS), 230–234 (DTAGV), and 295–298 (NKWD). Residues 351–435 (LKVSPAKLTQ…PVKIEFKTSE (85 aa)) enclose the KH-like domain.

Belongs to the TRAFAC class TrmE-Era-EngA-EngB-Septin-like GTPase superfamily. EngA (Der) GTPase family. Associates with the 50S ribosomal subunit.

Functionally, GTPase that plays an essential role in the late steps of ribosome biogenesis. The polypeptide is GTPase Der (Acinetobacter baumannii (strain AB0057)).